The primary structure comprises 404 residues: Cytoplasmic tRNA 2-thiolation protein 2 (404 aa).

It belongs to the CTU2/NCS2 family.

Its subcellular location is the cytoplasm. It participates in tRNA modification; 5-methoxycarbonylmethyl-2-thiouridine-tRNA biosynthesis. Functionally, plays a central role in 2-thiolation of mcm(5)S(2)U at tRNA wobble positions of tRNA(Lys), tRNA(Glu) and tRNA(Gln). May act by forming a heterodimer with NCS6/CTU1 that ligates sulfur from thiocarboxylated URM1 onto the uridine of tRNAs at wobble position. The sequence is that of Cytoplasmic tRNA 2-thiolation protein 2 from Drosophila yakuba (Fruit fly).